The following is a 687-amino-acid chain: C-mannosyltransferase dpy-19 (687 aa).

The next 11 membrane-spanning stretches (helical) occupy residues 24–44 (GISGNLWLATVVLIGLFVGFL), 170–190 (ITGVFVVAGTVATSLFYLGVL), 191–211 (VSDSIFGGILSVLCFAFNHGE), 223–243 (ESFAFPFIIGHIAILTYIIKY), 253–273 (LLISAAVPALLFWQFTQFAFF), 276–296 (ICSIFAAFSMDLVPLDTAKTI), 303–323 (AFFISFVMLFGNEMMIAALYF), 324–344 (PSIWALATVIYISPMLAGIRL), 347–367 (LYLLILALIFGSITLGLKVGF), 415–435 (LSSTLLIPLALLSIGAFSWDF), and 454–474 (GEVIYNLVQLICSTTMAVLIM).

This sequence belongs to the dpy-19 family.

The protein localises to the endoplasmic reticulum membrane. Functionally, C-mannosyltransferase that mediates C-mannosylation of tryptophan residues on target proteins such as unc-5 and mig-21. Mediates the attachment of alpha-mannose in C-C linkage to the C2 of the indole ring of tryptophan. C-mannosylation takes place in the endoplasmic reticulum and frequently found in thrombospondin (TSP) type-1 repeats and in the WSXWS motif of type I cytokine receptors. Required to orient neuroblasts QL and QR correctly on the anterior/posterior (A/P) axis: QL and QR are born in the same A/P position, but polarize and migrate left/right asymmetrically, QL migrates toward the posterior and QR migrates toward the anterior. Required with unc-40 to express mab-5 correctly in the Q cell descendants. The chain is C-mannosyltransferase dpy-19 from Caenorhabditis briggsae.